Consider the following 607-residue polypeptide: Phosphogluconate dehydratase (607 aa).

Positions 156 and 223 each coordinate [4Fe-4S] cluster.

The protein belongs to the IlvD/Edd family. [4Fe-4S] cluster is required as a cofactor.

It catalyses the reaction 6-phospho-D-gluconate = 2-dehydro-3-deoxy-6-phospho-D-gluconate + H2O. It functions in the pathway carbohydrate metabolism; Entner-Doudoroff pathway. Its function is as follows. Catalyzes the dehydration of 6-phospho-D-gluconate to 2-dehydro-3-deoxy-6-phospho-D-gluconate. In Zymomonas mobilis subsp. mobilis (strain ATCC 31821 / ZM4 / CP4), this protein is Phosphogluconate dehydratase.